The following is a 316-amino-acid chain: 2,3-dihydroxyphenylpropionate/2,3-dihydroxicinnamic acid 1,2-dioxygenase (316 aa).

His-115 serves as the catalytic Proton donor. The active-site Proton acceptor is the His-180.

Belongs to the LigB/MhpB extradiol dioxygenase family. Homotetramer. Requires Fe(2+) as cofactor.

It catalyses the reaction 3-(2,3-dihydroxyphenyl)propanoate + O2 = (2Z,4E)-2-hydroxy-6-oxonona-2,4-dienedioate + H(+). The enzyme catalyses (2E)-3-(2,3-dihydroxyphenyl)prop-2-enoate + O2 = (2Z,4E,7E)-2-hydroxy-6-oxonona-2,4,7-trienedioate + H(+). It participates in aromatic compound metabolism; 3-phenylpropanoate degradation. Functionally, catalyzes the non-heme iron(II)-dependent oxidative cleavage of 2,3-dihydroxyphenylpropionic acid and 2,3-dihydroxicinnamic acid into 2-hydroxy-6-ketononadienedioate and 2-hydroxy-6-ketononatrienedioate, respectively. In Rhodococcus rhodochrous, this protein is 2,3-dihydroxyphenylpropionate/2,3-dihydroxicinnamic acid 1,2-dioxygenase.